A 58-amino-acid chain; its full sequence is Gigasin-4 (58 aa).

As to expression, component of the organic matrix of calcified shell layers.

The protein is Gigasin-4 of Magallana gigas (Pacific oyster).